The primary structure comprises 513 residues: Zinc finger CCCH-type with G patch domain-containing protein (513 aa).

Residues 155–178 (PCSYYLEGECRFDEAKCRFSHGAL) form a C3H1-type zinc finger. Composition is skewed to acidic residues over residues 252–261 (DQDEDDELSS) and 273–283 (SDEAESDMDDL). Residues 252–283 (DQDEDDELSSEESTSSMRDASSDEAESDMDDL) form a disordered region. The G-patch domain occupies 312–358 (TRGIGSKLMEKMGYIHGTGLGSEGRGIVTPVSAQILPQGRSLDACME). Disordered regions lie at residues 411 to 430 (PGES…NNEL) and 477 to 513 (QVQM…MFEF). Residues 477–495 (QVQMQSHKQELATLQAQER) are compositionally biased toward polar residues. Positions 496 to 513 (SLSKEQQTRKSKNKMFEF) are enriched in basic and acidic residues.

It is found in the nucleus. In terms of biological role, transcription repressor. The polypeptide is Zinc finger CCCH-type with G patch domain-containing protein (Drosophila sechellia (Fruit fly)).